A 452-amino-acid polypeptide reads, in one-letter code: Pup--protein ligase (452 aa).

E9 is a binding site for Mg(2+). R53 is an ATP binding site. Mg(2+) is bound at residue Y55. D57 (proton acceptor) is an active-site residue. E63 contributes to the Mg(2+) binding site. 2 residues coordinate ATP: T66 and W419.

It belongs to the Pup ligase/Pup deamidase family. Pup-conjugating enzyme subfamily.

The catalysed reaction is ATP + [prokaryotic ubiquitin-like protein]-L-glutamate + [protein]-L-lysine = ADP + phosphate + N(6)-([prokaryotic ubiquitin-like protein]-gamma-L-glutamyl)-[protein]-L-lysine.. It participates in protein degradation; proteasomal Pup-dependent pathway. Its pathway is protein modification; protein pupylation. Functionally, catalyzes the covalent attachment of the prokaryotic ubiquitin-like protein modifier Pup to the proteasomal substrate proteins, thereby targeting them for proteasomal degradation. This tagging system is termed pupylation. The ligation reaction involves the side-chain carboxylate of the C-terminal glutamate of Pup and the side-chain amino group of a substrate lysine. The polypeptide is Pup--protein ligase (Thermobifida fusca (strain YX)).